The following is a 281-amino-acid chain: Pantothenate synthetase (281 aa).

30-37 serves as a coordination point for ATP; that stretch reads MGYLHEGH. H37 serves as the catalytic Proton donor. Q61 contacts (R)-pantoate. A beta-alanine-binding site is contributed by Q61. An ATP-binding site is contributed by 147 to 150; sequence GEKD. (R)-pantoate is bound at residue Q153. ATP-binding positions include I176 and 184-187; that span reads KSSR.

Belongs to the pantothenate synthetase family. As to quaternary structure, homodimer.

It is found in the cytoplasm. It catalyses the reaction (R)-pantoate + beta-alanine + ATP = (R)-pantothenate + AMP + diphosphate + H(+). The protein operates within cofactor biosynthesis; (R)-pantothenate biosynthesis; (R)-pantothenate from (R)-pantoate and beta-alanine: step 1/1. Its function is as follows. Catalyzes the condensation of pantoate with beta-alanine in an ATP-dependent reaction via a pantoyl-adenylate intermediate. The chain is Pantothenate synthetase from Clostridium botulinum (strain Kyoto / Type A2).